A 318-amino-acid polypeptide reads, in one-letter code: MTVITIAKRGLPKLTTSTSSTTTASSSSTITSVASSSSSLPLLSNSTSSSIIPSITPPSRNGNPYILDSGDMPNGTVFIVVGGIAGVIFLAILLWWVITTYSSHRLTRSVQDYESKMFSTQHTQFYGDSPYMDYPAKENFQDQVHISESDISPGNKDESVKDALVSHTNNEKPFLSNFERPLFSLASESNRNSLFISPTGDILYKTRLSKLYQESPRLLQKPVIMTSDNVSTNSLVSTISSSSASSLDNGNEKEVGEDIRKPAKIASSPSRKLLNSPESDGSVNRNHSKGNLLVVQSKRKPTPSTYLEHMLEGKEQDE.

A helical membrane pass occupies residues 75–98; that stretch reads GTVFIVVGGIAGVIFLAILLWWVI. Residue serine 129 is modified to Phosphoserine. A compositionally biased stretch (low complexity) spans 238–247; it reads TISSSSASSL. Residues 238–318 form a disordered region; it reads TISSSSASSL…HMLEGKEQDE (81 aa). The span at 250 to 261 shows a compositional bias: basic and acidic residues; sequence GNEKEVGEDIRK. Residues 276–285 show a composition bias toward polar residues; it reads SPESDGSVNR. Residues serine 279, serine 282, and serine 288 each carry the phosphoserine modification. The segment covering 309-318 has biased composition (basic and acidic residues); that stretch reads HMLEGKEQDE. Lysine 314 participates in a covalent cross-link: Glycyl lysine isopeptide (Lys-Gly) (interchain with G-Cter in ubiquitin).

It belongs to the PRM5 family.

The protein resides in the membrane. The polypeptide is Pheromone-regulated membrane protein 5 (PRM5) (Saccharomyces cerevisiae (strain ATCC 204508 / S288c) (Baker's yeast)).